The chain runs to 79 residues: Acyl carrier protein (79 aa).

The region spanning 2–77 is the Carrier domain; sequence SDIEARVKKI…NAVDYATKNQ (76 aa). Ser37 bears the O-(pantetheine 4'-phosphoryl)serine mark.

Belongs to the acyl carrier protein (ACP) family. Post-translationally, 4'-phosphopantetheine is transferred from CoA to a specific serine of apo-ACP by AcpS. This modification is essential for activity because fatty acids are bound in thioester linkage to the sulfhydryl of the prosthetic group.

It is found in the cytoplasm. It functions in the pathway lipid metabolism; fatty acid biosynthesis. Functionally, carrier of the growing fatty acid chain in fatty acid biosynthesis. The polypeptide is Acyl carrier protein (Variovorax paradoxus (strain S110)).